Here is a 90-residue protein sequence, read N- to C-terminus: MAVKIRLTRMGSKKKPFYRINVADSRSPRDGRFIETVGTYNPLVAENQVTLKEDRILEWLGNGAQPSDTVRNILSKEGVLKKFHDSKYSK.

Belongs to the bacterial ribosomal protein bS16 family.

This chain is Small ribosomal subunit protein bS16, found in Streptococcus sanguinis (strain SK36).